The primary structure comprises 592 residues: Medium-chain-fatty-acid--[acyl-carrier-protein] ligase JamA (592 aa).

Belongs to the ATP-dependent AMP-binding enzyme family.

The catalysed reaction is a medium-chain fatty acid + holo-[ACP] + ATP = a medium-chain fatty acyl-[ACP] + AMP + diphosphate. It catalyses the reaction a medium-chain fatty acid + ATP + H(+) = a medium-chain fatty acyl-AMP + diphosphate. It carries out the reaction a medium-chain fatty acyl-AMP + holo-[ACP] = a medium-chain fatty acyl-[ACP] + AMP + H(+). Its function is as follows. Ligase involved in the biosynthesis of jamaicamides, which show sodium channel blocking activity and fish toxicity. Initiates jamaicamide biosynthesis by the activation of the starter unit, 5-hexenoic acid, followed by the loading of the activated 5-hexenoic acid onto the acyl carrier protein JamC. In vitro, can also use 5-hexynoic acid, heptanoic acid, butanoic acid, hexanoic acid and benzoic acid. The protein is Medium-chain-fatty-acid--[acyl-carrier-protein] ligase JamA of Moorena producens (strain JHB).